The primary structure comprises 137 residues: Small ribosomal subunit protein eS6 (137 aa).

Residues 114-127 (LPVEEAPAEDAPES) are compositionally biased toward acidic residues. Residues 114-137 (LPVEEAPAEDAPESAEEKSEDKKE) are disordered. Residues 128-137 (AEEKSEDKKE) are compositionally biased toward basic and acidic residues.

The protein belongs to the eukaryotic ribosomal protein eS6 family.

The protein is Small ribosomal subunit protein eS6 of Nitrosopumilus maritimus (strain SCM1).